Reading from the N-terminus, the 127-residue chain is Group 3 truncated hemoglobin ctb (127 aa).

Heme-binding residues include tyrosine 64 and histidine 72.

This sequence belongs to the truncated hemoglobin family. Group III subfamily. Monomer. It depends on heme as a cofactor.

It localises to the cytoplasm. Has been suggested to be involved in cytochrome c peroxidase or P450-like oxygen chemistry or cyanide detoxification. The high oxygen affinity of this protein suggests that it probably does not function as an oxygen transporter. In Campylobacter jejuni subsp. jejuni serotype O:2 (strain ATCC 700819 / NCTC 11168), this protein is Group 3 truncated hemoglobin ctb (ctb).